The chain runs to 388 residues: S-adenosylmethionine synthase (388 aa).

His-16 contacts ATP. Asp-18 provides a ligand contact to Mg(2+). Glu-44 serves as a coordination point for K(+). Residues Glu-57 and Gln-100 each contribute to the L-methionine site. The interval 100–110 is flexible loop; the sequence is QSPEIAQGVDR. ATP is bound by residues 165 to 167, 231 to 232, Asp-240, 246 to 247, Ala-263, and Lys-267; these read DAK, KF, and RK. Position 240 (Asp-240) interacts with L-methionine. Lys-271 lines the L-methionine pocket.

The protein belongs to the AdoMet synthase family. Homotetramer; dimer of dimers. Mg(2+) serves as cofactor. It depends on K(+) as a cofactor.

The protein localises to the cytoplasm. The enzyme catalyses L-methionine + ATP + H2O = S-adenosyl-L-methionine + phosphate + diphosphate. It functions in the pathway amino-acid biosynthesis; S-adenosyl-L-methionine biosynthesis; S-adenosyl-L-methionine from L-methionine: step 1/1. Its function is as follows. Catalyzes the formation of S-adenosylmethionine (AdoMet) from methionine and ATP. The overall synthetic reaction is composed of two sequential steps, AdoMet formation and the subsequent tripolyphosphate hydrolysis which occurs prior to release of AdoMet from the enzyme. This chain is S-adenosylmethionine synthase, found in Psychrobacter arcticus (strain DSM 17307 / VKM B-2377 / 273-4).